Reading from the N-terminus, the 365-residue chain is Chorismate synthase (365 aa).

Arginine 48 and arginine 54 together coordinate NADP(+). FMN contacts are provided by residues 125 to 127 (RSS), 237 to 238 (NA), glycine 277, 292 to 296 (KPTSS), and arginine 318.

This sequence belongs to the chorismate synthase family. In terms of assembly, homotetramer. It depends on FMNH2 as a cofactor.

The enzyme catalyses 5-O-(1-carboxyvinyl)-3-phosphoshikimate = chorismate + phosphate. The protein operates within metabolic intermediate biosynthesis; chorismate biosynthesis; chorismate from D-erythrose 4-phosphate and phosphoenolpyruvate: step 7/7. Functionally, catalyzes the anti-1,4-elimination of the C-3 phosphate and the C-6 proR hydrogen from 5-enolpyruvylshikimate-3-phosphate (EPSP) to yield chorismate, which is the branch point compound that serves as the starting substrate for the three terminal pathways of aromatic amino acid biosynthesis. This reaction introduces a second double bond into the aromatic ring system. The sequence is that of Chorismate synthase from Verminephrobacter eiseniae (strain EF01-2).